Here is a 228-residue protein sequence, read N- to C-terminus: Ribose-5-phosphate isomerase A (228 aa).

Substrate-binding positions include 27 to 30 (TGTT), 86 to 89 (DGAD), and 100 to 103 (KGMG). The active-site Proton acceptor is the glutamate 109. Lysine 127 serves as a coordination point for substrate.

This sequence belongs to the ribose 5-phosphate isomerase family. Homodimer.

It carries out the reaction aldehydo-D-ribose 5-phosphate = D-ribulose 5-phosphate. Its pathway is carbohydrate degradation; pentose phosphate pathway; D-ribose 5-phosphate from D-ribulose 5-phosphate (non-oxidative stage): step 1/1. Catalyzes the reversible conversion of ribose-5-phosphate to ribulose 5-phosphate. The sequence is that of Ribose-5-phosphate isomerase A from Borreliella burgdorferi (strain ZS7) (Borrelia burgdorferi).